The primary structure comprises 118 residues: Ribonuclease P protein component (118 aa).

The protein belongs to the RnpA family. In terms of assembly, consists of a catalytic RNA component (M1 or rnpB) and a protein subunit.

It carries out the reaction Endonucleolytic cleavage of RNA, removing 5'-extranucleotides from tRNA precursor.. RNaseP catalyzes the removal of the 5'-leader sequence from pre-tRNA to produce the mature 5'-terminus. It can also cleave other RNA substrates such as 4.5S RNA. The protein component plays an auxiliary but essential role in vivo by binding to the 5'-leader sequence and broadening the substrate specificity of the ribozyme. The chain is Ribonuclease P protein component from Vibrio cholerae serotype O1 (strain ATCC 39541 / Classical Ogawa 395 / O395).